Consider the following 529-residue polypeptide: Cytochrome P450 monooxygenase 136 (529 aa).

A helical membrane pass occupies residues 9–29 (SPLALAVLSIATCQLALVWWY). Residue cysteine 447 coordinates heme.

Belongs to the cytochrome P450 family. The cofactor is heme.

The protein localises to the membrane. It participates in secondary metabolite biosynthesis. In terms of biological role, cytochrome P450 monooxygenase that is able to use delta(6)-protoilludene as a substrate to produce delta(6)-protoilludene-5-ol. In Postia placenta (strain ATCC 44394 / Madison 698-R) (Brown rot fungus), this protein is Cytochrome P450 monooxygenase 136.